The primary structure comprises 199 residues: Phosphatidylethanolamine N-methyltransferase (199 aa).

Topologically, residues Met-1–Asp-12 are lumenal. The segment at residues Pro-13–Ala-33 is an intramembrane region (helical). At Arg-34–Ala-45 the chain is on the lumenal side. A helical transmembrane segment spans residues Phe-46 to Leu-66. At Arg-67 to Gly-93 the chain is on the cytoplasmic side. A helical membrane pass occupies residues Leu-94–Ala-114. S-adenosyl-L-methionine is bound at residue Gly-98 to Gly-100. The Lumenal segment spans residues Gly-115 to His-157. A helical membrane pass occupies residues Ala-158–Leu-178. Residues Tyr-179–Ser-199 lie on the Cytoplasmic side of the membrane. Residue Glu-180–Glu-181 participates in S-adenosyl-L-methionine binding.

The protein belongs to the class VI-like SAM-binding methyltransferase superfamily. PEMT/PEM2 methyltransferase family. Isoform 2 is N-glycosylated with high-mannose oligosaccharides. Primarily expressed in liver (at protein level).

Its subcellular location is the endoplasmic reticulum. It is found in the endoplasmic reticulum membrane. The protein resides in the mitochondrion membrane. It carries out the reaction a 1,2-diacyl-sn-glycero-3-phospho-N-methylethanolamine + S-adenosyl-L-methionine = a 1,2-diacyl-sn-glycero-3-phospho-N,N-dimethylethanolamine + S-adenosyl-L-homocysteine + H(+). The enzyme catalyses a 1,2-diacyl-sn-glycero-3-phospho-N,N-dimethylethanolamine + S-adenosyl-L-methionine = a 1,2-diacyl-sn-glycero-3-phosphocholine + S-adenosyl-L-homocysteine + H(+). The catalysed reaction is a 1,2-diacyl-sn-glycero-3-phosphoethanolamine + S-adenosyl-L-methionine = a 1,2-diacyl-sn-glycero-3-phospho-N-methylethanolamine + S-adenosyl-L-homocysteine + H(+). It catalyses the reaction 1,2-di-(9Z-octadecenoyl)-sn-glycero-3-phosphoethanolamine + S-adenosyl-L-methionine = 1,2-di-(9Z-octadecenoyl)-sn-glycero-3-phospho-N-methylethanolamine + S-adenosyl-L-homocysteine + H(+). It carries out the reaction 1,2-di-(9Z-octadecenoyl)-sn-glycero-3-phospho-N-methylethanolamine + S-adenosyl-L-methionine = 1,2-di-(9Z-octadecenoyl)-sn-glycero-3-phospho-N,N-dimethylethanolamine + S-adenosyl-L-homocysteine + H(+). The enzyme catalyses 1,2-di-(9Z-octadecenoyl)-sn-glycero-3-phospho-N,N-dimethylethanolamine + S-adenosyl-L-methionine = 1,2-di-(9Z-octadecenoyl)-sn-glycero-3-phosphocholine + S-adenosyl-L-homocysteine + H(+). The catalysed reaction is 1,2-di-(9Z,12Z-octadecadienoyl)-sn-glycero-3-phosphoethanolamine + S-adenosyl-L-methionine = 1,2-di-(9Z,12Z-octadecadienoyl)-sn-glycero-3-phospho-N-methylethanolamine + S-adenosyl-L-homocysteine + H(+). It catalyses the reaction 1,2-di-(9Z,12Z-octadecadienoyl)-sn-glycero-3-phospho-N-methylethanolamine + S-adenosyl-L-methionine = 1,2-di-(9Z,12Z-octadecadienoyl)-sn-glycero-3-phospho-N,N-dimethylethanolamine + S-adenosyl-L-homocysteine + H(+). It carries out the reaction 1,2-di-(9Z,12Z-octadecadienoyl)-sn-glycero-3-phospho-N,N-dimethylethanolamine + S-adenosyl-L-methionine = 1,2-di-(9Z,12Z-octadecadienoyl)-sn-glycero-3-phosphocholine + S-adenosyl-L-homocysteine + H(+). The enzyme catalyses 1,2-di-(9Z,12Z,15Z-octadecatrienoyl)-sn-glycero-3-phosphoethanolamine + S-adenosyl-L-methionine = 1,2-di-(9Z,12Z,15Z-octadecatrienoyl)-sn-glycero-3-phospho-N-methylethanolamine + S-adenosyl-L-homocysteine + H(+). The catalysed reaction is 1,2-di-(9Z,12Z,15Z-octadecatrienoyl)-sn-glycero-3-phospho-N-methylethanolamine + S-adenosyl-L-methionine = 1,2-di-(9Z,12Z,15Z-octadecatrienoyl)-sn-glycero-3-phospho-N,N-dimethylethanolamine + S-adenosyl-L-homocysteine + H(+). It catalyses the reaction 1,2-di-(9Z,12Z,15Z-octadecatrienoyl)-sn-glycero-3-phospho-N,N-dimethylethanolamine + S-adenosyl-L-methionine = 1,2-di-(9Z,12Z,15Z-octadecatrienoyl)-sn-glycero-3-phosphocholine + S-adenosyl-L-homocysteine + H(+). It carries out the reaction 1-hexadecanoyl-2-(4Z,7Z,10Z,13Z,16Z,19Z-docosahexaenoyl)-sn-glycero-3-phosphoethanolamine + S-adenosyl-L-methionine = 1-hexadecanoyl-2-(4Z,7Z,10Z,13Z,16Z,19Z-docosahexaenoyl)-sn-glycero-3-phospho-N-methylethanolamine + S-adenosyl-L-homocysteine + H(+). The enzyme catalyses 1-hexadecanoyl-2-(4Z,7Z,10Z,13Z,16Z,19Z-docosahexaenoyl)-sn-glycero-3-phospho-N-methylethanolamine + S-adenosyl-L-methionine = 1-hexadecanoyl-2-(4Z,7Z,10Z,13Z,16Z,19Z-docosahexaenoyl)-sn-glycero-3-phospho-N,N-dimethylethanolamine + S-adenosyl-L-homocysteine + H(+). The catalysed reaction is 1-hexadecanoyl-2-(4Z,7Z,10Z,13Z,16Z,19Z-docosahexaenoyl)-sn-glycero-3-phospho-N,N-dimethylethanolamine + S-adenosyl-L-methionine = 1-hexadecanoyl-2-(4Z,7Z,10Z,13Z,16Z,19Z-docosahexaenoyl)-sn-glycero-3-phosphocholine + S-adenosyl-L-homocysteine + H(+). It functions in the pathway phospholipid metabolism; phosphatidylcholine biosynthesis. The first methylation is rate-limiting. Functionally, catalyzes the three sequential steps of the methylation pathway for the biosynthesis of phosphatidylcholine, a critical and essential component for membrane structure. Uses S-adenosylmethionine (S-adenosyl-L-methionine, SAM or AdoMet) as the methyl group donor for the methylation of phosphatidylethanolamine (1,2-diacyl-sn-glycero-3-phosphoethanolamine, PE) to phosphatidylmonomethylethanolamine (1,2-diacyl-sn-glycero-3-phospho-N-methylethanolamine, PMME), PMME to phosphatidyldimethylethanolamine (1,2-diacyl-sn-glycero-3-phospho-N,N-dimethylethanolamine, PDME), and PDME to phosphatidylcholine (1,2-diacyl-sn-glycero-3-phosphocholine, PC), producing S-adenosyl-L-homocysteine in each step. Responsible for approximately 30% of hepatic PC with the CDP-choline pathway accounting for the other 70%. Catalyzes the three sequential steps of the methylation of 1,2-diacyl-sn-glycero-3-phospho-N-methylethanolamine (PMME) to 1,2-diacyl-sn-glycero-3-phospho-N,N-dimethylethanolamine (PDME) more efficiently than isoform 2. Induces increase in PC species with longer polyunsaturated chains than isoform 2. Its function is as follows. Produces a higher increase in the level of PC species containing long chains with three double bonds than isoform 1. The sequence is that of Phosphatidylethanolamine N-methyltransferase from Homo sapiens (Human).